The following is a 242-amino-acid chain: 1-(5-phosphoribosyl)-5-[(5-phosphoribosylamino)methylideneamino] imidazole-4-carboxamide isomerase (242 aa).

The active-site Proton acceptor is Asp8. Asp129 (proton donor) is an active-site residue.

It belongs to the HisA/HisF family.

It localises to the cytoplasm. The catalysed reaction is 1-(5-phospho-beta-D-ribosyl)-5-[(5-phospho-beta-D-ribosylamino)methylideneamino]imidazole-4-carboxamide = 5-[(5-phospho-1-deoxy-D-ribulos-1-ylimino)methylamino]-1-(5-phospho-beta-D-ribosyl)imidazole-4-carboxamide. The protein operates within amino-acid biosynthesis; L-histidine biosynthesis; L-histidine from 5-phospho-alpha-D-ribose 1-diphosphate: step 4/9. The polypeptide is 1-(5-phosphoribosyl)-5-[(5-phosphoribosylamino)methylideneamino] imidazole-4-carboxamide isomerase (Dictyoglomus thermophilum (strain ATCC 35947 / DSM 3960 / H-6-12)).